A 159-amino-acid chain; its full sequence is Transcription elongation factor GreA (159 aa).

A coiled-coil region spans residues 14–76 (IKKLENELEY…QLENMLKNAS (63 aa)).

It belongs to the GreA/GreB family.

Functionally, necessary for efficient RNA polymerase transcription elongation past template-encoded arresting sites. The arresting sites in DNA have the property of trapping a certain fraction of elongating RNA polymerases that pass through, resulting in locked ternary complexes. Cleavage of the nascent transcript by cleavage factors such as GreA or GreB allows the resumption of elongation from the new 3'terminus. GreA releases sequences of 2 to 3 nucleotides. The polypeptide is Transcription elongation factor GreA (Clostridium kluyveri (strain NBRC 12016)).